The sequence spans 632 residues: ATP-dependent zinc metalloprotease FtsH (632 aa).

The Cytoplasmic segment spans residues 1–9 (MKPTNEPKK). A helical transmembrane segment spans residues 10–30 (PFFQSPIILAVLGGILLIFFL). Residues 31 to 116 (RSFNSDGSFS…INYSGFSESN (86 aa)) lie on the Periplasmic side of the membrane. The chain crosses the membrane as a helical span at residues 117–137 (FFTDMLGWLMPILVILGLWMF). The Cytoplasmic segment spans residues 138–632 (MANRMQKNMG…RLIPLEEQAS (495 aa)). Residues alanine 173, 213–217 (GTGKT), and histidine 354 contribute to the ATP site. Histidine 434 lines the Zn(2+) pocket. Glutamate 435 is a catalytic residue. Residues histidine 438 and aspartate 511 each coordinate Zn(2+).

It in the central section; belongs to the AAA ATPase family. This sequence in the C-terminal section; belongs to the peptidase M41 family. In terms of assembly, homohexamer. Zn(2+) is required as a cofactor.

Its subcellular location is the cell inner membrane. Functionally, acts as a processive, ATP-dependent zinc metallopeptidase for both cytoplasmic and membrane proteins. Plays a role in the quality control of integral membrane proteins. The protein is ATP-dependent zinc metalloprotease FtsH of Helicobacter pylori (strain ATCC 700392 / 26695) (Campylobacter pylori).